We begin with the raw amino-acid sequence, 128 residues long: uncharacterized protein (128 aa).

Its subcellular location is the mitochondrion. This is an uncharacterized protein from Saccharomyces cerevisiae (strain ATCC 204508 / S288c) (Baker's yeast).